We begin with the raw amino-acid sequence, 339 residues long: Adenosine deaminase (339 aa).

The Zn(2+) site is built by histidine 15 and histidine 17. Residues histidine 17, aspartate 19, and glycine 172 each coordinate substrate. Residue histidine 199 participates in Zn(2+) binding. Residue glutamate 202 is the Proton donor of the active site. Residue aspartate 279 participates in Zn(2+) binding.

The protein belongs to the metallo-dependent hydrolases superfamily. Adenosine and AMP deaminases family. Adenosine deaminase subfamily. Requires Zn(2+) as cofactor.

It carries out the reaction adenosine + H2O + H(+) = inosine + NH4(+). The catalysed reaction is 2'-deoxyadenosine + H2O + H(+) = 2'-deoxyinosine + NH4(+). In terms of biological role, catalyzes the hydrolytic deamination of adenosine and 2-deoxyadenosine. This Lacticaseibacillus casei (strain BL23) (Lactobacillus casei) protein is Adenosine deaminase.